The primary structure comprises 137 residues: Large ribosomal subunit protein uL16 (137 aa).

Belongs to the universal ribosomal protein uL16 family. As to quaternary structure, part of the 50S ribosomal subunit.

In terms of biological role, binds 23S rRNA and is also seen to make contacts with the A and possibly P site tRNAs. The polypeptide is Large ribosomal subunit protein uL16 (Cereibacter sphaeroides (strain ATCC 17025 / ATH 2.4.3) (Rhodobacter sphaeroides)).